A 132-amino-acid polypeptide reads, in one-letter code: Small ribosomal subunit protein uS8 (132 aa).

It belongs to the universal ribosomal protein uS8 family. As to quaternary structure, part of the 30S ribosomal subunit. Contacts proteins S5 and S12.

One of the primary rRNA binding proteins, it binds directly to 16S rRNA central domain where it helps coordinate assembly of the platform of the 30S subunit. The polypeptide is Small ribosomal subunit protein uS8 (Agrobacterium fabrum (strain C58 / ATCC 33970) (Agrobacterium tumefaciens (strain C58))).